Here is a 379-residue protein sequence, read N- to C-terminus: Succinate--CoA ligase [ADP-forming] subunit beta (379 aa).

The region spanning 9 to 237 is the ATP-grasp domain; the sequence is RDILARYGIP…SSDEPEAEQR (229 aa). ATP is bound by residues Lys-45, 52 to 54, Ile-94, and Glu-99; that span reads GRG. Mg(2+) is bound by residues Asn-192 and Asp-206. Substrate contacts are provided by residues Asn-257 and 314 to 316; that span reads GIT.

It belongs to the succinate/malate CoA ligase beta subunit family. As to quaternary structure, heterotetramer of two alpha and two beta subunits. The cofactor is Mg(2+).

The catalysed reaction is succinate + ATP + CoA = succinyl-CoA + ADP + phosphate. It carries out the reaction GTP + succinate + CoA = succinyl-CoA + GDP + phosphate. Its pathway is carbohydrate metabolism; tricarboxylic acid cycle; succinate from succinyl-CoA (ligase route): step 1/1. Succinyl-CoA synthetase functions in the citric acid cycle (TCA), coupling the hydrolysis of succinyl-CoA to the synthesis of either ATP or GTP and thus represents the only step of substrate-level phosphorylation in the TCA. The beta subunit provides nucleotide specificity of the enzyme and binds the substrate succinate, while the binding sites for coenzyme A and phosphate are found in the alpha subunit. The sequence is that of Succinate--CoA ligase [ADP-forming] subunit beta from Roseiflexus sp. (strain RS-1).